We begin with the raw amino-acid sequence, 362 residues long: Probable non-structural 41.0 kDa protein (362 aa).

The interval 341–362 (MNAAAPSAPTPTELPVFSPPSS) is disordered.

This Maize rough dwarf virus (MRDV) protein is Probable non-structural 41.0 kDa protein (S6).